Here is a 541-residue protein sequence, read N- to C-terminus: Chaperonin GroEL 2 (541 aa).

ATP contacts are provided by residues 29 to 32 (TLGP), 86 to 90 (DGTTT), glycine 413, 476 to 478 (NAA), and aspartate 492.

Belongs to the chaperonin (HSP60) family. As to quaternary structure, forms a cylinder of 14 subunits composed of two heptameric rings stacked back-to-back. Interacts with the co-chaperonin GroES.

It is found in the secreted. The protein resides in the capsule. The protein localises to the cell surface. It localises to the cell wall. The catalysed reaction is ATP + H2O + a folded polypeptide = ADP + phosphate + an unfolded polypeptide.. In terms of biological role, together with its co-chaperonin GroES, plays an essential role in assisting protein folding. The GroEL-GroES system forms a nano-cage that allows encapsulation of the non-native substrate proteins and provides a physical environment optimized to promote and accelerate protein folding. The sequence is that of Chaperonin GroEL 2 from Mycolicibacterium paratuberculosis (strain ATCC BAA-968 / K-10) (Mycobacterium paratuberculosis).